A 426-amino-acid polypeptide reads, in one-letter code: Putative zinc protease AlbF (426 aa).

His-66 serves as a coordination point for Zn(2+). Catalysis depends on Glu-69, which acts as the Proton acceptor. Positions 70 and 142 each coordinate Zn(2+).

It belongs to the peptidase M16 family. Zn(2+) serves as cofactor.

Its function is as follows. Required for production of the bacteriocin subtilosin. Could catalyze some step in the processing of presubtilosin. The polypeptide is Putative zinc protease AlbF (albF) (Bacillus subtilis (strain 168)).